The chain runs to 202 residues: Peptide methionine sulfoxide reductase A1 (202 aa).

Residues 1-20 are disordered; that stretch reads MNILNKLGIGSSRQTNMDPS. Ser-189 bears the Phosphoserine mark.

It belongs to the MsrA Met sulfoxide reductase family.

It is found in the cytoplasm. The protein resides in the cytosol. It catalyses the reaction L-methionyl-[protein] + [thioredoxin]-disulfide + H2O = L-methionyl-(S)-S-oxide-[protein] + [thioredoxin]-dithiol. The catalysed reaction is [thioredoxin]-disulfide + L-methionine + H2O = L-methionine (S)-S-oxide + [thioredoxin]-dithiol. Catalyzes the reduction of methionine sulfoxide (MetSO) to methionine in proteins. Plays a protective role against oxidative stress by restoring activity to proteins that have been inactivated by methionine oxidation. MSRA family specifically reduces the MetSO S-enantiomer. The protein is Peptide methionine sulfoxide reductase A1 (MSRA1) of Arabidopsis thaliana (Mouse-ear cress).